Reading from the N-terminus, the 432-residue chain is MCFSPVLEINMQSESNVTVRDDIDDIDTNMYQPLSYPLSFQVSLTGFLMLEIVLGLGSNLTVLVLYCMKSNLINSVSNIITMNLHVLDVIICVGCIPLTIVILLLSLESNTALICCFHEACVSFASVSTAINVFAITLDRYDISVKPANRILTMGRAVMLMTSIWIFSFFSFLIPFIEVNFFSLQSGNTWANKTLLCVSTSEYYTELGMYYHLLVQIPIFFFTVIVMLITYTKILQALNIRIGTRFSTGQKKKARKKKTISLATHETTDMSQSSGGRNVVFGVRTSVSVIIALRRAVKRHRERRERQKRVFKMSLLIISTFLLCWTPISVLNTTILCLGPSDLLVKLRLCFLVMAYGTTIFHPLLYAFTRQKFQKVLKSKMKKRVVSIVEADPMPNNAVIHNSWIDPKRNKKVTYEDSEIREKCLVPQVVTD.

Residues 1-45 are Extracellular-facing; sequence MCFSPVLEINMQSESNVTVRDDIDDIDTNMYQPLSYPLSFQVSLT. A glycan (N-linked (GlcNAc...) asparagine) is linked at N16. A helical membrane pass occupies residues 46 to 66; the sequence is GFLMLEIVLGLGSNLTVLVLY. Residues 67–85 are Cytoplasmic-facing; it reads CMKSNLINSVSNIITMNLH. A helical transmembrane segment spans residues 86–106; that stretch reads VLDVIICVGCIPLTIVILLLS. Residues 107 to 115 are Extracellular-facing; that stretch reads LESNTALIC. A helical membrane pass occupies residues 116-136; sequence CFHEACVSFASVSTAINVFAI. The Cytoplasmic portion of the chain corresponds to 137–156; sequence TLDRYDISVKPANRILTMGR. A helical transmembrane segment spans residues 157-177; the sequence is AVMLMTSIWIFSFFSFLIPFI. Residues 178–208 are Extracellular-facing; that stretch reads EVNFFSLQSGNTWANKTLLCVSTSEYYTELG. N192 is a glycosylation site (N-linked (GlcNAc...) asparagine). The helical transmembrane segment at 209 to 229 threads the bilayer; it reads MYYHLLVQIPIFFFTVIVMLI. Residues 230 to 314 lie on the Cytoplasmic side of the membrane; that stretch reads TYTKILQALN…ERQKRVFKMS (85 aa). The helical transmembrane segment at 315 to 335 threads the bilayer; it reads LLIISTFLLCWTPISVLNTTI. The Extracellular segment spans residues 336 to 348; it reads LCLGPSDLLVKLR. The chain crosses the membrane as a helical span at residues 349–369; sequence LCFLVMAYGTTIFHPLLYAFT. Residues 370-432 lie on the Cytoplasmic side of the membrane; it reads RQKFQKVLKS…KCLVPQVVTD (63 aa).

This sequence belongs to the G-protein coupled receptor 1 family. As to expression, abundant levels detected in the brain and heart and no detectable expression in other peripheral tissues.

Its subcellular location is the cell membrane. Its function is as follows. Orphan G-protein coupled receptor. Seems to act through a G(i)/G(o) mediated pathway. May be involved in ciliogenesis. The polypeptide is G-protein coupled receptor 22 (Gpr22) (Mus musculus (Mouse)).